Reading from the N-terminus, the 180-residue chain is Large ribosomal subunit protein uL5 (180 aa).

Belongs to the universal ribosomal protein uL5 family. As to quaternary structure, part of the 50S ribosomal subunit; part of the 5S rRNA/L5/L18/L25 subcomplex. Contacts the 5S rRNA and the P site tRNA. Forms a bridge to the 30S subunit in the 70S ribosome.

Its function is as follows. This is one of the proteins that bind and probably mediate the attachment of the 5S RNA into the large ribosomal subunit, where it forms part of the central protuberance. In the 70S ribosome it contacts protein S13 of the 30S subunit (bridge B1b), connecting the 2 subunits; this bridge is implicated in subunit movement. Contacts the P site tRNA; the 5S rRNA and some of its associated proteins might help stabilize positioning of ribosome-bound tRNAs. In Stenotrophomonas maltophilia (strain K279a), this protein is Large ribosomal subunit protein uL5.